The following is a 38-amino-acid chain: Potassium channel toxin alpha-KTx 3.8 (38 aa).

3 cysteine pairs are disulfide-bonded: Cys8/Cys28, Cys14/Cys33, and Cys18/Cys35. The interval 26-33 (GKCMNGKC) is interaction with Ca(2+)-activated K(+) channels.

In terms of tissue distribution, expressed by the venom gland.

It localises to the secreted. Functionally, potassium channel inhibitor. The sequence is that of Potassium channel toxin alpha-KTx 3.8 from Hottentotta tamulus sindicus (Scorpion).